A 175-amino-acid chain; its full sequence is DPY30 domain-containing protein 1 (175 aa).

The segment covering 94–112 has biased composition (basic and acidic residues); sequence QQKEKQKSEDFETGQEKSF. Disordered stretches follow at residues 94 to 134 and 152 to 175; these read QQKE…QAEE and APNLSRVEELDEPMLSDNGVSAPP.

The protein belongs to the dpy-30 family. Component of the axonemal radial spoke complex 1 (RS1), at least composed of spoke head proteins RSPH1, RSPH3, RSPH9 and the cilia-specific component RSPH4A or sperm-specific component RSPH6A, spoke stalk proteins RSPH14, DNAJB13, DYDC1, ROPN1L and NME5, and the anchor protein IQUB. Interacts with SH3GL3.

The protein resides in the cytoplasm. Its subcellular location is the cytoskeleton. It is found in the flagellum axoneme. In terms of biological role, functions as part of axonemal radial spoke complexes that play an important part in the motility of sperm and cilia. Plays a crucial role during acrosome biogenesis. This is DPY30 domain-containing protein 1 (Dydc1) from Mus musculus (Mouse).